A 189-amino-acid polypeptide reads, in one-letter code: Elongation factor P (189 aa).

The protein belongs to the elongation factor P family.

The protein resides in the cytoplasm. It participates in protein biosynthesis; polypeptide chain elongation. Involved in peptide bond synthesis. Stimulates efficient translation and peptide-bond synthesis on native or reconstituted 70S ribosomes in vitro. Probably functions indirectly by altering the affinity of the ribosome for aminoacyl-tRNA, thus increasing their reactivity as acceptors for peptidyl transferase. This chain is Elongation factor P, found in Rhizobium rhizogenes (strain K84 / ATCC BAA-868) (Agrobacterium radiobacter).